The sequence spans 287 residues: Probable glucose uptake protein GlcU (287 aa).

Transmembrane regions (helical) follow at residues 7 to 29 (LIAL…VGGG), 34 to 56 (IRGT…HAAF), 58 to 75 (NLTV…WAFG), 114 to 136 (WSTI…GISL), 156 to 178 (MGIL…IFGV), 183 to 202 (ALFF…SMNH), 209 to 228 (TALN…FMFY), 233 to 255 (VGVA…GGIF), and 267 to 286 (IGIW…LGNL).

The protein belongs to the GRP transporter (TC 2.A.7.5) family.

The protein localises to the cell membrane. Its function is as follows. Involved in the uptake of glucose. The polypeptide is Probable glucose uptake protein GlcU (glcU) (Staphylococcus epidermidis (strain ATCC 35984 / DSM 28319 / BCRC 17069 / CCUG 31568 / BM 3577 / RP62A)).